The primary structure comprises 164 residues: UPF0114 protein Spro_2386 (164 aa).

3 helical membrane-spanning segments follow: residues 15–35 (LLAP…IKFF), 53–73 (LVLT…LVMV), and 136–156 (LMWY…MGYL).

It belongs to the UPF0114 family.

It is found in the cell membrane. The sequence is that of UPF0114 protein Spro_2386 from Serratia proteamaculans (strain 568).